The sequence spans 49 residues: MRIQVALKCSECGNKNYYTTREKNKKEKLSLRKYCPKCNKHTVHNETKA.

The protein belongs to the bacterial ribosomal protein bL33 family.

This chain is Large ribosomal subunit protein bL33, found in Thermosipho melanesiensis (strain DSM 12029 / CIP 104789 / BI429).